Consider the following 868-residue polypeptide: DNA mismatch repair protein MutS (868 aa).

Residue 620–627 (GPNMGGKS) participates in ATP binding.

Belongs to the DNA mismatch repair MutS family.

Its function is as follows. This protein is involved in the repair of mismatches in DNA. It is possible that it carries out the mismatch recognition step. This protein has a weak ATPase activity. The chain is DNA mismatch repair protein MutS from Xylella fastidiosa (strain 9a5c).